We begin with the raw amino-acid sequence, 155 residues long: Ribonuclease H (155 aa).

One can recognise an RNase H type-1 domain in the interval 4–145; sequence DISKVVIYTD…ADKLAVQGRQ (142 aa). Mg(2+)-binding residues include Asp-13, Glu-51, Asp-73, and Asp-137.

Belongs to the RNase H family. As to quaternary structure, monomer. It depends on Mg(2+) as a cofactor.

It is found in the cytoplasm. It catalyses the reaction Endonucleolytic cleavage to 5'-phosphomonoester.. In terms of biological role, endonuclease that specifically degrades the RNA of RNA-DNA hybrids. The chain is Ribonuclease H from Rickettsia bellii (strain RML369-C).